Consider the following 145-residue polypeptide: Large ribosomal subunit protein uL15 (145 aa).

A compositionally biased stretch (basic and acidic residues) spans 1–18 (MKLHELKYTEGSKKDVTR). Residues 1–51 (MKLHELKYTEGSKKDVTRVGRGMASGKGKTSTRGHKGQNSRSGGGVRVGFE) are disordered. Residues 42–51 (SGGGVRVGFE) show a composition bias toward gly residues.

Belongs to the universal ribosomal protein uL15 family. Part of the 50S ribosomal subunit.

Its function is as follows. Binds to the 23S rRNA. This is Large ribosomal subunit protein uL15 from Mesoplasma florum (strain ATCC 33453 / NBRC 100688 / NCTC 11704 / L1) (Acholeplasma florum).